We begin with the raw amino-acid sequence, 861 residues long: Leucine--tRNA ligase (861 aa).

The 'HIGH' region signature appears at 42–52 (PYPSGNLHMGH). Residues 620 to 624 (KMSKS) carry the 'KMSKS' region motif. An ATP-binding site is contributed by lysine 623.

This sequence belongs to the class-I aminoacyl-tRNA synthetase family.

Its subcellular location is the cytoplasm. It carries out the reaction tRNA(Leu) + L-leucine + ATP = L-leucyl-tRNA(Leu) + AMP + diphosphate. The sequence is that of Leucine--tRNA ligase from Baumannia cicadellinicola subsp. Homalodisca coagulata.